The following is a 240-amino-acid chain: UDP-2,3-diacylglucosamine hydrolase (240 aa).

Positions 8, 10, 41, 79, and 114 each coordinate Mn(2+). Residue 79-80 (NR) coordinates substrate. Substrate is bound by residues aspartate 122, serine 160, asparagine 164, lysine 167, and histidine 195. Residues histidine 195 and histidine 197 each coordinate Mn(2+).

The protein belongs to the LpxH family. It depends on Mn(2+) as a cofactor.

The protein resides in the cell inner membrane. It carries out the reaction UDP-2-N,3-O-bis[(3R)-3-hydroxytetradecanoyl]-alpha-D-glucosamine + H2O = 2-N,3-O-bis[(3R)-3-hydroxytetradecanoyl]-alpha-D-glucosaminyl 1-phosphate + UMP + 2 H(+). It functions in the pathway glycolipid biosynthesis; lipid IV(A) biosynthesis; lipid IV(A) from (3R)-3-hydroxytetradecanoyl-[acyl-carrier-protein] and UDP-N-acetyl-alpha-D-glucosamine: step 4/6. Its function is as follows. Hydrolyzes the pyrophosphate bond of UDP-2,3-diacylglucosamine to yield 2,3-diacylglucosamine 1-phosphate (lipid X) and UMP by catalyzing the attack of water at the alpha-P atom. Involved in the biosynthesis of lipid A, a phosphorylated glycolipid that anchors the lipopolysaccharide to the outer membrane of the cell. The protein is UDP-2,3-diacylglucosamine hydrolase of Proteus mirabilis (strain HI4320).